We begin with the raw amino-acid sequence, 328 residues long: Hairy/enhancer-of-split related with YRPW motif-like protein (328 aa).

The disordered stretch occupies residues 1–57 (MKRPKEPSGSDGESDGPIDVGQEGQLSQMARPLSTPSSSQMQARKKHRGIIEKRRRD). The segment covering 24–42 (GQLSQMARPLSTPSSSQMQ) has biased composition (polar residues). The tract at residues 42-111 (QARKKHRGII…GGTGFFDARA (70 aa)) is transcriptional repression and interaction with NCOR1 and SIN3A. Positions 43–98 (ARKKHRGIIEKRRRDRINSSLSELRRLVPTAFEKQGSSKLEKAEVLQMTVDHLKML) constitute a bHLH domain. One can recognise an Orange domain in the interval 116-153 (FRSIGFRECLTEVIRYLGVLEGPSSRADPVRIRLLSHL). The interval 239 to 308 (SRGASSTRRA…NSSSPGPAGR (70 aa)) is disordered. A compositionally biased stretch (low complexity) spans 261-270 (APSSRAARSS).

This sequence belongs to the HEY family. Self-associates. Interacts with GATA4, GATA6, HES1, HEY1 and HEY2. Interacts with HDAC1, NCOR1 and SIN3A.

The protein localises to the nucleus. Downstream effector of Notch signaling which may be required for cardiovascular development. Transcriptional repressor which binds preferentially to the canonical E box sequence 5'-CACGTG-3'. Represses transcription by the cardiac transcriptional activators GATA4 and GATA6. In Homo sapiens (Human), this protein is Hairy/enhancer-of-split related with YRPW motif-like protein (HEYL).